Reading from the N-terminus, the 2242-residue chain is Transcription factor sma-9 (2242 aa).

The stretch at 120–383 (HQLAQQQAQQ…QQAQQAQLAQ (264 aa)) forms a coiled coil. Residues 317 to 330 (AAQQAQAQNNASQQ) are compositionally biased toward low complexity. 5 disordered regions span residues 317 to 344 (AAQQ…SSTP), 494 to 553 (TPVA…SMSD), 583 to 617 (GAQS…SRSQ), 712 to 754 (LAAH…SSFP), and 1323 to 1349 (EDST…SPPL). Residues 331–344 (RPSVASTPALSSTP) are compositionally biased toward polar residues. Low complexity-rich tracts occupy residues 494–523 (TPVA…ATSS) and 539–550 (SSSKAASSGNES). The span at 583 to 601 (GAQSSVDHDSNSGGSTRTS) shows a compositional bias: polar residues. Residues 1324-1338 (DSTSAEPSTSGQSLL) show a composition bias toward polar residues. 5 C2H2-type zinc fingers span residues 1447 to 1469 (YICD…IKSH), 1475 to 1499 (FNCT…SKTH), 1700 to 1722 (LKCD…QHTH), 1734 to 1760 (YQCS…HGVH), and 1790 to 1814 (FMCV…SKTH). Residues 2029-2039 (SITSPIVSSST) are compositionally biased toward low complexity. Disordered stretches follow at residues 2029–2059 (SITS…PTHT) and 2085–2107 (STDK…PRPI). Residues 2085-2099 (STDKAHASESLSDRL) show a composition bias toward basic and acidic residues. 2 C2H2-type zinc fingers span residues 2111-2134 (TKCQ…HVDH) and 2143-2167 (YKCP…VTAH). A disordered region spans residues 2219–2242 (HELYAQTQQGAGSSTSNQSPKAAN). Positions 2223 to 2242 (AQTQQGAGSSTSNQSPKAAN) are enriched in polar residues.

In terms of tissue distribution, expressed in the ventral nerve cord (VNC), pharynx, intestine and seam cells (at protein level).

The protein resides in the nucleus. In terms of biological role, transcription factor, probably acting as a transcriptional activator and repressor, involved in the TGF-beta-like dbl-1 signaling pathway. Plays a role in regulation of body size, and patterning of male-specific genital sensilla (simple sense organs), known as rays, and mating-associated structures, spicules. Required for the dorsoventral patterning of the postembryonic mesodermal lineage (M lineage), acting by antagonizing the TGF-beta-like dbl-1 signaling pathway, in part by repressing expression of transcription factor unc-130. Involved in egg-laying, perhaps via modulation of cholinergic neurotransmission. Involved in production of reactive oxygen species (ROS), acting downstream of the dbl-1 signaling pathway. Plays a role in the mitochondrial unfolded protein response (mtUPR). May play a role in modulating lifespan and in responses to proteotoxic stress. Its function is as follows. Transcription factor, probably acting as a transcriptional activator. Required for patterning of male-specific genital sensilla (simple sense organs), known as rays. Dispensable for regulation of body size. The protein is Transcription factor sma-9 of Caenorhabditis elegans.